A 637-amino-acid polypeptide reads, in one-letter code: Biosynthetic arginine decarboxylase (637 aa).

The residue at position 101 (Lys-101) is an N6-(pyridoxal phosphate)lysine. 286–296 (FDVGGGLAVDY) lines the substrate pocket.

This sequence belongs to the Orn/Lys/Arg decarboxylase class-II family. SpeA subfamily. Mg(2+) is required as a cofactor. It depends on pyridoxal 5'-phosphate as a cofactor.

It carries out the reaction L-arginine + H(+) = agmatine + CO2. The protein operates within amine and polyamine biosynthesis; agmatine biosynthesis; agmatine from L-arginine: step 1/1. Its function is as follows. Catalyzes the biosynthesis of agmatine from arginine. The chain is Biosynthetic arginine decarboxylase from Shewanella sp. (strain MR-7).